Here is a 438-residue protein sequence, read N- to C-terminus: Aspartate--tRNA(Asp) ligase (438 aa).

An L-aspartate-binding site is contributed by Glu170. The aspartate stretch occupies residues 192–195 (QLYK). L-aspartate is bound at residue Arg214. ATP-binding positions include 214-216 (RAE), 222-224 (RHL), and Glu361. Positions 361 and 364 each coordinate Mg(2+). 2 residues coordinate L-aspartate: Ser364 and Arg368. Position 409 to 412 (409 to 412 (GAER)) interacts with ATP.

This sequence belongs to the class-II aminoacyl-tRNA synthetase family. Type 2 subfamily. In terms of assembly, homodimer. Requires Mg(2+) as cofactor.

The protein resides in the cytoplasm. The enzyme catalyses tRNA(Asp) + L-aspartate + ATP = L-aspartyl-tRNA(Asp) + AMP + diphosphate. In terms of biological role, catalyzes the attachment of L-aspartate to tRNA(Asp) in a two-step reaction: L-aspartate is first activated by ATP to form Asp-AMP and then transferred to the acceptor end of tRNA(Asp). In Pyrococcus horikoshii (strain ATCC 700860 / DSM 12428 / JCM 9974 / NBRC 100139 / OT-3), this protein is Aspartate--tRNA(Asp) ligase.